Here is an 802-residue protein sequence, read N- to C-terminus: Neuronal PAS domain-containing protein 4 (802 aa).

Residues 1-13 form a basic motif; degenerate region; it reads MYRSTKGASKARR. Positions 1-53 constitute a bHLH domain; it reads MYRSTKGASKARRDQINAEIRNLKELLPLAEADKVRLSYLHIMSLACIYTRKG. Positions 5–38 form a coiled coil; sequence TKGASKARRDQINAEIRNLKELLPLAEADKVRLS. The interval 14–53 is helix-loop-helix motif; sequence DQINAEIRNLKELLPLAEADKVRLSYLHIMSLACIYTRKG. PAS domains follow at residues 70–144 and 203–275; these read SAQE…LDAD and PGPG…LAEN. The region spanning 280 to 319 is the PAC domain; the sequence is AEMVVRLQAKHGGWTWIYCMLYSDGPEGPITANNYPISDT. Polar residues-rich tracts occupy residues 472-495, 502-518, and 527-555; these read PSSATFPDPLTSSLQGQLTESSAR, TPCTSTFPDQLLPSTAT, and THEQLTPPSTAFQAHLNSPSQTFPEQLSP. A disordered region spans residues 472–555; it reads PSSATFPDPL…SQTFPEQLSP (84 aa). Positions 624–648 form a coiled coil; the sequence is YTEKEQNEIDRLIQQISQLAQGMDR.

Efficient DNA binding requires dimerization with another bHLH protein. Heterodimer; forms a heterodimer with ARNT, ARNT2 or BMAL1. Post-translationally, ubiquitinated, leading to degradation by the proteosome. As to expression, specifically expressed in neurons. Expressed in the lateral nucleus of the amygdala (at protein level).

The protein localises to the nucleus. Transcription factor expressed in neurons of the brain that regulates the excitatory-inhibitory balance within neural circuits and is required for contextual memory in the hippocampus. Plays a key role in the structural and functional plasticity of neurons. Acts as an early-response transcription factor in both excitatory and inhibitory neurons, where it induces distinct but overlapping sets of late-response genes in these two types of neurons, allowing the synapses that form on inhibitory and excitatory neurons to be modified by neuronal activity in a manner specific to their function within a circuit, thereby facilitating appropriate circuit responses to sensory experience. In excitatory neurons, activates transcription of BDNF, which in turn controls the number of GABA-releasing synapses that form on excitatory neurons, thereby promoting an increased number of inhibitory synapses on excitatory neurons. In inhibitory neurons, regulates a distinct set of target genes that serve to increase excitatory input onto somatostatin neurons, probably resulting in enhanced feedback inhibition within cortical circuits. The excitatory and inhibitory balance in neurons affects a number of processes, such as short-term and long-term memory, acquisition of experience, fear memory, response to stress and social behavior. Acts as a regulator of dendritic spine development in olfactory bulb granule cells in a sensory-experience-dependent manner by regulating expression of MDM2. Efficient DNA binding requires dimerization with another bHLH protein, such as ARNT, ARNT2 or BMAL1. Can activate the CME (CNS midline enhancer) element. The chain is Neuronal PAS domain-containing protein 4 from Rattus norvegicus (Rat).